Reading from the N-terminus, the 189-residue chain is dCTP deaminase, dUMP-forming (189 aa).

DCTP-binding positions include 101–106 (KSSLGR), D119, 127–129 (TLE), Q148, Y162, and Q174. E129 acts as the Proton donor/acceptor in catalysis. The disordered stretch occupies residues 166–189 (AVGSKYQGQRGPTPSRSHLNFIKS). Residues 171–189 (YQGQRGPTPSRSHLNFIKS) show a composition bias toward polar residues.

The protein belongs to the dCTP deaminase family. In terms of assembly, homotrimer.

It catalyses the reaction dCTP + 2 H2O = dUMP + NH4(+) + diphosphate. It functions in the pathway pyrimidine metabolism; dUMP biosynthesis; dUMP from dCTP: step 1/1. Bifunctional enzyme that catalyzes both the deamination of dCTP to dUTP and the hydrolysis of dUTP to dUMP without releasing the toxic dUTP intermediate. This Mycolicibacterium smegmatis (strain ATCC 700084 / mc(2)155) (Mycobacterium smegmatis) protein is dCTP deaminase, dUMP-forming.